The sequence spans 421 residues: Gamma-glutamyl phosphate reductase (421 aa).

It belongs to the gamma-glutamyl phosphate reductase family.

The protein resides in the cytoplasm. The catalysed reaction is L-glutamate 5-semialdehyde + phosphate + NADP(+) = L-glutamyl 5-phosphate + NADPH + H(+). It participates in amino-acid biosynthesis; L-proline biosynthesis; L-glutamate 5-semialdehyde from L-glutamate: step 2/2. In terms of biological role, catalyzes the NADPH-dependent reduction of L-glutamate 5-phosphate into L-glutamate 5-semialdehyde and phosphate. The product spontaneously undergoes cyclization to form 1-pyrroline-5-carboxylate. The chain is Gamma-glutamyl phosphate reductase from Bordetella petrii (strain ATCC BAA-461 / DSM 12804 / CCUG 43448).